The sequence spans 311 residues: tRNA dimethylallyltransferase (311 aa).

10 to 17 (GPTASGKT) is a binding site for ATP. Residue 12–17 (TASGKT) participates in substrate binding. Interaction with substrate tRNA stretches follow at residues 35–38 (DSAL), 159–163 (QRINR), and 240–245 (RCVGYR).

Belongs to the IPP transferase family. As to quaternary structure, monomer. The cofactor is Mg(2+).

The catalysed reaction is adenosine(37) in tRNA + dimethylallyl diphosphate = N(6)-dimethylallyladenosine(37) in tRNA + diphosphate. Functionally, catalyzes the transfer of a dimethylallyl group onto the adenine at position 37 in tRNAs that read codons beginning with uridine, leading to the formation of N6-(dimethylallyl)adenosine (i(6)A). The chain is tRNA dimethylallyltransferase from Haemophilus influenzae (strain 86-028NP).